The primary structure comprises 185 residues: Elongation factor P (185 aa).

Belongs to the elongation factor P family.

It is found in the cytoplasm. Its pathway is protein biosynthesis; polypeptide chain elongation. Involved in peptide bond synthesis. Stimulates efficient translation and peptide-bond synthesis on native or reconstituted 70S ribosomes in vitro. Probably functions indirectly by altering the affinity of the ribosome for aminoacyl-tRNA, thus increasing their reactivity as acceptors for peptidyl transferase. In Staphylococcus aureus (strain Mu3 / ATCC 700698), this protein is Elongation factor P.